We begin with the raw amino-acid sequence, 389 residues long: Transmembrane protease serine 11A (389 aa).

Over 1–23 (MEVAGYGTHNRDLKQWMVTLLSA) the chain is Cytoplasmic. A helical; Signal-anchor for type II membrane protein membrane pass occupies residues 24-44 (LSLMMVVVTIGLLALFLVFDI). An SEA domain is found at 31 to 148 (VTIGLLALFL…SLVQVKDCGK (118 aa)). Residues 45 to 389 (QVNSNSGQKS…RHWIASKTGL (345 aa)) lie on the Extracellular side of the membrane. One can recognise a Peptidase S1 domain in the interval 158–388 (IVSGNPAAKG…YRHWIASKTG (231 aa)). A disulfide bond links Cys183 and Cys199. Active-site charge relay system residues include His198 and Asp243. Asn274 carries N-linked (GlcNAc...) asparagine glycosylation. Disulfide bonds link Cys308/Cys324 and Cys335/Cys364. The active-site Charge relay system is Ser339.

The protein belongs to the peptidase S1 family.

The protein localises to the membrane. Its function is as follows. Probable serine protease which may play a role in cellular senescence. Overexpression inhibits cell growth and induce G1 cell cycle arrest. This is Transmembrane protease serine 11A (Tmprss11a) from Mus musculus (Mouse).